Reading from the N-terminus, the 160-residue chain is Nucleotide-binding protein CbuK_1936 (160 aa).

Belongs to the YajQ family.

In terms of biological role, nucleotide-binding protein. The chain is Nucleotide-binding protein CbuK_1936 from Coxiella burnetii (strain CbuK_Q154) (Coxiella burnetii (strain Q154)).